The sequence spans 108 residues: UPF0060 membrane protein CJA_3703 (108 aa).

A run of 4 helical transmembrane segments spans residues 6-26 (LLFVVTALAEIIGCFLPYLWL), 31-51 (SIWLLLPAALSLALFAWLLTL), 61-81 (AAYGGVYVAVALLWLYWVDGV), and 85-105 (AYDWAGAAVALLGMAIIAMGW).

Belongs to the UPF0060 family.

It is found in the cell inner membrane. The chain is UPF0060 membrane protein CJA_3703 from Cellvibrio japonicus (strain Ueda107) (Pseudomonas fluorescens subsp. cellulosa).